A 503-amino-acid polypeptide reads, in one-letter code: UDP-N-acetylglucosamine--peptide N-acetylglucosaminyltransferase GtfA subunit (503 aa).

The N-terminus R-fold-1 stretch occupies residues 1-78; that stretch reads MTIYNINLGI…FTDIKIAPTS (78 aa). Position 16–19 (16–19) interacts with UDP; that stretch reads GVEY. Positions 79 to 195 are extended beta-sheet domain; it reads VTVDDVLAYF…VYHFKDKIFY (117 aa). Positions 196-306 are C-terminus R-fold-1; the sequence is GKQAFVRAFM…QPKIVTIPVG (111 aa). Residue H242 participates in N-acetyl-D-glucosamine binding. Positions 307–503 are R-fold-2; the sequence is SIDSLTDSSQ…KKTVEEVLHD (197 aa). Residue R328 participates in UDP binding. E332 is an N-acetyl-D-glucosamine binding site. UDP-binding positions include K333, G358, and 384-385; that span reads HA. 404-407 is an N-acetyl-D-glucosamine binding site; that stretch reads EGFG. Residue 408 to 412 coordinates UDP; that stretch reads LTLME.

The protein belongs to the glycosyltransferase group 1 family. Glycosyltransferase 4 subfamily. As to quaternary structure, monomer. Interacts with stabilizing protein GtfB, probably as a heterotetramer with 2 subunits each of GtfA and GtfB, part of the accessory SecA2/SecY2 protein translocation apparatus.

The protein localises to the cytoplasm. Its subcellular location is the cell membrane. The enzyme catalyses L-seryl-[protein] + UDP-N-acetyl-alpha-D-glucosamine = 3-O-[N-acetyl-alpha-D-glucosaminyl]-L-seryl-[protein] + UDP + H(+). It functions in the pathway protein modification; protein glycosylation. Functionally, required for the polymorphic O-glycosylation of serine-rich repeat protein PsrP. Catalyzes the first step in glycosylation by transferring N-acetylglucosamine from UDP-GlcNAc to serine residues in PsrP. Part of the accessory SecA2/SecY2 system specifically required to export serine-rich repeat cell wall proteins encoded upstream in the same operon. The GtfA-GtfB complex adds GlcNAc from UDP-GlcNAc to PsrP (experimentally characterized with truncated PsrP-SSR1 constructs); this subunit alone has weak N-acetylglucosaminyl transferase activity that is 10-fold stimulated by GtfB. The complex requires at least a 25 residue-long peptide for activity; the in vitro assay has only been seen to glycosylate Ser residues. The alpha linkage was shown in L.reuteri. The sequence is that of UDP-N-acetylglucosamine--peptide N-acetylglucosaminyltransferase GtfA subunit from Streptococcus pneumoniae serotype 4 (strain ATCC BAA-334 / TIGR4).